The following is a 342-amino-acid chain: Isopentenyl-diphosphate delta-isomerase (342 aa).

Residue 12 to 13 (RK) coordinates substrate. FMN is bound by residues 71–73 (AMT), Ser101, and Asn129. Residue 101-103 (SQR) participates in substrate binding. Position 163 (Gln163) interacts with substrate. Mg(2+) is bound at residue Glu164. FMN contacts are provided by residues Lys195, Thr225, 272–274 (GIR), and 293–294 (AR).

The protein belongs to the IPP isomerase type 2 family. Homooctamer. Dimer of tetramers. The cofactor is FMN. NADPH serves as cofactor. It depends on Mg(2+) as a cofactor.

It localises to the cytoplasm. The catalysed reaction is isopentenyl diphosphate = dimethylallyl diphosphate. Functionally, involved in the biosynthesis of isoprenoids. Catalyzes the 1,3-allylic rearrangement of the homoallylic substrate isopentenyl (IPP) to its allylic isomer, dimethylallyl diphosphate (DMAPP). The protein is Isopentenyl-diphosphate delta-isomerase of Mycolicibacterium gilvum (strain PYR-GCK) (Mycobacterium gilvum (strain PYR-GCK)).